The following is a 1426-amino-acid chain: Nephrocystin-4 (1426 aa).

Residue S142 is modified to Phosphoserine. Disordered stretches follow at residues 450 to 536 (GSEE…SPAQ) and 896 to 935 (RQGKGPQDVSRESDATRRRKLERMRSVRLQEAGGDLGRRG). The segment covering 474-486 (KPPTSPSSPPAPV) has biased composition (pro residues). A compositionally biased stretch (polar residues) spans 503-536 (SISQLAASPRSPTQHCLARPTSQLPHGSQASPAQ). The tract at residues 823 to 1426 (LTLANVGHPC…EAFCVKVIYQ (604 aa)) is sufficient for basal bodies localization.

The protein belongs to the NPHP4 family. Interacts with NPHP1. Interacts with NPHP1 and RPGRIP1L/NPHP8; NPHP1, NPHP4 and RPGRIP1L are proposed to form a functional NPHP1-4-8 module localized to cell-cell contacts and the ciliary transition zone; NPHP4 mediates the interaction between NPHP1 and RPGRIP1L. Interacts with IQCB1/NPHP5; the interaction likely requires additional interactors. Interacts with RPGRIP1, CEP164, JADE1, PALS1, INADL, PARD6A, INVS, DVL2, LATS1. Interacts with INTU; INTU mediates the interaction between NPHP4 and DAAM1. Interacts with SPATA7. Expressed in kidney, skeletal muscle, heart and liver, and to a lesser extent in brain and lung.

Its subcellular location is the cytoplasm. It is found in the cytoskeleton. It localises to the cilium basal body. The protein resides in the microtubule organizing center. The protein localises to the centrosome. Its subcellular location is the cell junction. It is found in the tight junction. It localises to the nucleus. Involved in the organization of apical junctions; the function is proposed to implicate a NPHP1-4-8 module. Does not seem to be strictly required for ciliogenesis. Required for building functional cilia. Involved in the organization of the subapical actin network in multiciliated epithelial cells. Seems to recruit INT to basal bodies of motile cilia which subsequently interacts with actin-modifying proteins such as DAAM1. In cooperation with INVS may down-regulate the canonical Wnt pathway and promote the Wnt-PCP pathway by regulating expression and subcellular location of disheveled proteins. Stabilizes protein levels of JADE1 and promotes its translocation to the nucleus leading to cooperative inhibition of canonical Wnt signaling. Acts as a negative regulator of the hippo pathway by association with LATS1 and modifying LATS1-dependent phosphorylation and localization of WWTR1/TAZ. This Homo sapiens (Human) protein is Nephrocystin-4 (NPHP4).